The chain runs to 383 residues: Fructose-1,6-bisphosphate aldolase/phosphatase (383 aa).

The active-site Proton acceptor; for FBP phosphatase activity is D11. Residues D11, H18, D52, and D53 each coordinate Mg(2+). H18 lines the beta-D-fructose 1,6-bisphosphate pocket. H18 contributes to the dihydroxyacetone phosphate binding site. A beta-D-fructose 1,6-bisphosphate-binding site is contributed by Y90. Q94 serves as a coordination point for Mg(2+). 103-104 (GN) serves as a coordination point for beta-D-fructose 1,6-bisphosphate. Residue D131 coordinates Mg(2+). K132 lines the beta-D-fructose 1,6-bisphosphate pocket. Residue K132 participates in dihydroxyacetone phosphate binding. Y228 functions as the Proton donor/acceptor; for FBP aldolase activity in the catalytic mechanism. 3 residues coordinate Mg(2+): K231, D232, and D233. The active-site Schiff-base intermediate with DHAP; for FBP aldolase activity is K231. Beta-D-fructose 1,6-bisphosphate-binding positions include 241–242 (QH), R265, D286, and Y347. Residues R265 and D286 each coordinate dihydroxyacetone phosphate. The tract at residues 361 to 383 (FKKEEDVKKAKPSVYTSKDQGMD) is disordered. Over residues 374 to 383 (VYTSKDQGMD) the composition is skewed to polar residues.

The protein belongs to the FBP aldolase/phosphatase family. Homooctamer; dimer of tetramers. Mg(2+) is required as a cofactor.

The enzyme catalyses beta-D-fructose 1,6-bisphosphate + H2O = beta-D-fructose 6-phosphate + phosphate. It carries out the reaction beta-D-fructose 1,6-bisphosphate = D-glyceraldehyde 3-phosphate + dihydroxyacetone phosphate. It functions in the pathway carbohydrate biosynthesis; gluconeogenesis. Its function is as follows. Catalyzes two subsequent steps in gluconeogenesis: the aldol condensation of dihydroxyacetone phosphate (DHAP) and glyceraldehyde-3-phosphate (GA3P) to fructose-1,6-bisphosphate (FBP), and the dephosphorylation of FBP to fructose-6-phosphate (F6P). This Metallosphaera sedula (strain ATCC 51363 / DSM 5348 / JCM 9185 / NBRC 15509 / TH2) protein is Fructose-1,6-bisphosphate aldolase/phosphatase.